The sequence spans 243 residues: UPF0502 protein RALTA_B0914 (243 aa).

A compositionally biased stretch (polar residues) spans M1–T10. Positions M1 to P23 are disordered.

The protein belongs to the UPF0502 family.

The sequence is that of UPF0502 protein RALTA_B0914 from Cupriavidus taiwanensis (strain DSM 17343 / BCRC 17206 / CCUG 44338 / CIP 107171 / LMG 19424 / R1) (Ralstonia taiwanensis (strain LMG 19424)).